A 217-amino-acid polypeptide reads, in one-letter code: Transcription antitermination protein NusB (217 aa).

It belongs to the NusB family.

Functionally, involved in transcription antitermination. Required for transcription of ribosomal RNA (rRNA) genes. Binds specifically to the boxA antiterminator sequence of the ribosomal RNA (rrn) operons. This Microcystis aeruginosa (strain NIES-843 / IAM M-2473) protein is Transcription antitermination protein NusB.